The primary structure comprises 398 residues: Tyrosine--tRNA ligase (398 aa).

Residues 42 to 51 carry the 'HIGH' region motif; that stretch reads PTAPDLHLGH. Residues 226–230 carry the 'KMSKS' region motif; sequence KMSKS. Residue Lys229 participates in ATP binding. The region spanning 341–397 is the S4 RNA-binding domain; it reads AFLEAAGLVKSRGEAKRLIKEGALSVDGVRCDDANSPLASGEYVIKLGKKRFLRLTV.

It belongs to the class-I aminoacyl-tRNA synthetase family. TyrS type 2 subfamily. In terms of assembly, homodimer.

It localises to the cytoplasm. It carries out the reaction tRNA(Tyr) + L-tyrosine + ATP = L-tyrosyl-tRNA(Tyr) + AMP + diphosphate + H(+). Its function is as follows. Catalyzes the attachment of tyrosine to tRNA(Tyr) in a two-step reaction: tyrosine is first activated by ATP to form Tyr-AMP and then transferred to the acceptor end of tRNA(Tyr). In Nitratidesulfovibrio vulgaris (strain ATCC 29579 / DSM 644 / CCUG 34227 / NCIMB 8303 / VKM B-1760 / Hildenborough) (Desulfovibrio vulgaris), this protein is Tyrosine--tRNA ligase.